A 282-amino-acid polypeptide reads, in one-letter code: Pantothenate synthetase (282 aa).

26–33 (MGNLHEGH) provides a ligand contact to ATP. The active-site Proton donor is H33. Q57 serves as a coordination point for (R)-pantoate. Q57 contributes to the beta-alanine binding site. Residue 144 to 147 (GKKD) participates in ATP binding. Q150 contributes to the (R)-pantoate binding site. ATP is bound by residues I173 and 181 to 184 (LSSR).

It belongs to the pantothenate synthetase family. Homodimer.

Its subcellular location is the cytoplasm. The catalysed reaction is (R)-pantoate + beta-alanine + ATP = (R)-pantothenate + AMP + diphosphate + H(+). It participates in cofactor biosynthesis; (R)-pantothenate biosynthesis; (R)-pantothenate from (R)-pantoate and beta-alanine: step 1/1. In terms of biological role, catalyzes the condensation of pantoate with beta-alanine in an ATP-dependent reaction via a pantoyl-adenylate intermediate. The sequence is that of Pantothenate synthetase from Cupriavidus necator (strain ATCC 17699 / DSM 428 / KCTC 22496 / NCIMB 10442 / H16 / Stanier 337) (Ralstonia eutropha).